The sequence spans 113 residues: Large ribosomal subunit protein bL19 (113 aa).

The protein belongs to the bacterial ribosomal protein bL19 family.

This protein is located at the 30S-50S ribosomal subunit interface and may play a role in the structure and function of the aminoacyl-tRNA binding site. This chain is Large ribosomal subunit protein bL19, found in Mycolicibacterium gilvum (strain PYR-GCK) (Mycobacterium gilvum (strain PYR-GCK)).